A 535-amino-acid chain; its full sequence is Reticuline oxidase (535 aa).

A signal peptide spans 1–23; sequence MMCRSLTLRFFLFIVLLQTCVRG. An N-linked (GlcNAc...) asparagine glycan is attached at Asn42. The 175-residue stretch at 71 to 245 folds into the FAD-binding PCMH-type domain; sequence TVSKPSFIVM…YAWKIKLLPV (175 aa). Residues 108-170 constitute a cross-link (6-(S-cysteinyl)-8alpha-(pros-histidyl)-FAD (His-Cys)); the sequence is HSYEGLSYTA…DTLGFTAGWC (63 aa). Asn475 carries an N-linked (GlcNAc...) asparagine glycan.

The protein belongs to the oxygen-dependent FAD-linked oxidoreductase family. FAD serves as cofactor. Requires a metal cation as cofactor. In terms of processing, the FAD cofactor is bound via a bicovalent 6-S-cysteinyl, 8alpha-N1-histidyl FAD linkage. Expressed in roots and stems. Not detected in leaves or reproductive organs. Restricted to the parietal region of sieve elements adjacent or proximal to laticifers.

The protein localises to the cytoplasmic vesicle. It carries out the reaction (S)-reticuline + O2 = (S)-scoulerine + H2O2 + H(+). The protein operates within alkaloid biosynthesis; (S)-scoulerine biosynthesis; (S)-scoulerine from (S)-reticuline: step 1/1. In terms of biological role, oxygen-dependent FAD-dependent oxidoreductase essential to the formation of benzophenanthridine alkaloids in the response of plants to pathogenic attack. Catalyzes the stereospecific conversion of the N-methyl moiety of (S)-reticuline into the berberine bridge carbon of (S)-scoulerine. Involved in the biosynthesis of sanguinarine. This Papaver somniferum (Opium poppy) protein is Reticuline oxidase (BBE1).